Here is a 555-residue protein sequence, read N- to C-terminus: Protein peste (555 aa).

The Cytoplasmic segment spans residues 1–7 (MTSRTRH). The helical transmembrane segment at 8 to 28 (CARLGIVLLGICCIASGIYLF) threads the bilayer. The Extracellular segment spans residues 29 to 434 (RNWIDMFTRM…VRVSEEIAAD (406 aa)). N-linked (GlcNAc...) asparagine glycosylation is found at Asn70, Asn110, Asn129, Asn213, Asn242, Asn312, and Asn342. Residues 435–455 (IALVPLIVLLGQIVTGILLAG) form a helical membrane-spanning segment. Residues 456–555 (GLICTCWYPT…SEDSPDVVVR (100 aa)) lie on the Cytoplasmic side of the membrane.

It belongs to the CD36 family.

It is found in the cell membrane. In terms of biological role, (Microbial infection) Plays a role in mycobacterial infection. Mediates infection by M.fortuitum and uptake of M.smegmatis. This is Protein peste from Drosophila melanogaster (Fruit fly).